Here is a 159-residue protein sequence, read N- to C-terminus: 2-C-methyl-D-erythritol 2,4-cyclodiphosphate synthase (159 aa).

Aspartate 8 and histidine 10 together coordinate a divalent metal cation. 4-CDP-2-C-methyl-D-erythritol 2-phosphate contacts are provided by residues 8–10 (DVH) and 34–35 (HS). Histidine 42 is a binding site for a divalent metal cation. 4-CDP-2-C-methyl-D-erythritol 2-phosphate-binding positions include 56–58 (DIG), 61–65 (FPDTD), 100–106 (AQAPKMA), 132–135 (TTSE), phenylalanine 139, and arginine 142.

The protein belongs to the IspF family. In terms of assembly, homotrimer. A divalent metal cation serves as cofactor.

It carries out the reaction 4-CDP-2-C-methyl-D-erythritol 2-phosphate = 2-C-methyl-D-erythritol 2,4-cyclic diphosphate + CMP. It participates in isoprenoid biosynthesis; isopentenyl diphosphate biosynthesis via DXP pathway; isopentenyl diphosphate from 1-deoxy-D-xylulose 5-phosphate: step 4/6. Involved in the biosynthesis of isopentenyl diphosphate (IPP) and dimethylallyl diphosphate (DMAPP), two major building blocks of isoprenoid compounds. Catalyzes the conversion of 4-diphosphocytidyl-2-C-methyl-D-erythritol 2-phosphate (CDP-ME2P) to 2-C-methyl-D-erythritol 2,4-cyclodiphosphate (ME-CPP) with a corresponding release of cytidine 5-monophosphate (CMP). This is 2-C-methyl-D-erythritol 2,4-cyclodiphosphate synthase from Aliivibrio salmonicida (strain LFI1238) (Vibrio salmonicida (strain LFI1238)).